Reading from the N-terminus, the 334-residue chain is Holliday junction branch migration complex subunit RuvB (334 aa).

The tract at residues 4–184 (ADRLIQPQLQ…FGIPLRLEFY (181 aa)) is large ATPase domain (RuvB-L). Residues arginine 24, glycine 65, lysine 68, threonine 69, threonine 70, 131-133 (EDY), arginine 174, tyrosine 184, and arginine 221 each bind ATP. Threonine 69 provides a ligand contact to Mg(2+). A small ATPAse domain (RuvB-S) region spans residues 185 to 255 (NVKDLSTIVT…VAEQALDLLD (71 aa)). The segment at 258 to 334 (GEGFDYMDRK…YLHFGMIKPE (77 aa)) is head domain (RuvB-H). Arginine 294, arginine 313, and arginine 318 together coordinate DNA.

It belongs to the RuvB family. In terms of assembly, homohexamer. Forms an RuvA(8)-RuvB(12)-Holliday junction (HJ) complex. HJ DNA is sandwiched between 2 RuvA tetramers; dsDNA enters through RuvA and exits via RuvB. An RuvB hexamer assembles on each DNA strand where it exits the tetramer. Each RuvB hexamer is contacted by two RuvA subunits (via domain III) on 2 adjacent RuvB subunits; this complex drives branch migration. In the full resolvosome a probable DNA-RuvA(4)-RuvB(12)-RuvC(2) complex forms which resolves the HJ.

Its subcellular location is the cytoplasm. It catalyses the reaction ATP + H2O = ADP + phosphate + H(+). The RuvA-RuvB-RuvC complex processes Holliday junction (HJ) DNA during genetic recombination and DNA repair, while the RuvA-RuvB complex plays an important role in the rescue of blocked DNA replication forks via replication fork reversal (RFR). RuvA specifically binds to HJ cruciform DNA, conferring on it an open structure. The RuvB hexamer acts as an ATP-dependent pump, pulling dsDNA into and through the RuvAB complex. RuvB forms 2 homohexamers on either side of HJ DNA bound by 1 or 2 RuvA tetramers; 4 subunits per hexamer contact DNA at a time. Coordinated motions by a converter formed by DNA-disengaged RuvB subunits stimulates ATP hydrolysis and nucleotide exchange. Immobilization of the converter enables RuvB to convert the ATP-contained energy into a lever motion, pulling 2 nucleotides of DNA out of the RuvA tetramer per ATP hydrolyzed, thus driving DNA branch migration. The RuvB motors rotate together with the DNA substrate, which together with the progressing nucleotide cycle form the mechanistic basis for DNA recombination by continuous HJ branch migration. Branch migration allows RuvC to scan DNA until it finds its consensus sequence, where it cleaves and resolves cruciform DNA. The protein is Holliday junction branch migration complex subunit RuvB of Shewanella sp. (strain ANA-3).